Here is a 150-residue protein sequence, read N- to C-terminus: MPIWVDADACPLPVKEILYRAAHRAQVVTTLVANQGLRVPPSPYIKTQQVEKGFDVADHVIAQQVIPGDLVITGDIPLASWVIDAGGEALNPRGEIYTRETIQARLGMRNFMEELRSAGVQTGGPAPFNAADKQRFANALDKWLLKGKLS.

It belongs to the UPF0178 family.

The sequence is that of UPF0178 protein ASA_3749 from Aeromonas salmonicida (strain A449).